The primary structure comprises 990 residues: Membrane alanyl aminopeptidase (990 aa).

The signal sequence occupies residues 1 to 15 (FTIFLGVALLQGVLT). Positions 16 to 35 (LSPIPVPEEEWAEFSRMLRD) are cleaved as a propeptide — activation peptide. Residue asparagine 295 is glycosylated (N-linked (GlcNAc...) asparagine). Substrate is bound at residue 321 to 325 (GAMEN). Residue histidine 357 participates in Zn(2+) binding. Glutamate 358 functions as the Proton acceptor in the catalytic mechanism. The Zn(2+) site is built by histidine 361 and glutamate 380. 3 N-linked (GlcNAc...) asparagine glycosylation sites follow: asparagine 609, asparagine 623, and asparagine 752. Glycine 968 carries the GPI-anchor amidated glycine lipid modification. Residues 969–990 (SGNIAALSVVSLLVTLAINMVA) constitute a propeptide, removed in mature form.

This sequence belongs to the peptidase M1 family. Requires Zn(2+) as cofactor. Midgut brush-border membrane.

It is found in the cell membrane. Its function is as follows. Binds to the B.thuringiensis toxin, CryIA(C). The sequence is that of Membrane alanyl aminopeptidase from Manduca sexta (Tobacco hawkmoth).